The sequence spans 485 residues: NADH-quinone oxidoreductase subunit N (485 aa).

Helical transmembrane passes span 8-28 (LIAL…MLSI), 35-55 (FLNA…LWFV), 71-91 (GFAM…CTFA), 105-125 (FYLL…ANHL), 127-147 (ALFL…GYAF), 159-179 (YTIL…LVYA), 203-223 (LLAG…LVPF), 235-255 (PAPV…GVVM), 271-291 (VVLG…ALSQ), 297-317 (LLGY…IVLQ), 326-346 (VGVY…VVSL), 373-393 (AAVM…LGFI), 408-430 (WWLV…RVAV), and 455-475 (IVVL…QPLI).

This sequence belongs to the complex I subunit 2 family. In terms of assembly, NDH-1 is composed of 13 different subunits. Subunits NuoA, H, J, K, L, M, N constitute the membrane sector of the complex.

It is found in the cell inner membrane. The enzyme catalyses a quinone + NADH + 5 H(+)(in) = a quinol + NAD(+) + 4 H(+)(out). Its function is as follows. NDH-1 shuttles electrons from NADH, via FMN and iron-sulfur (Fe-S) centers, to quinones in the respiratory chain. The immediate electron acceptor for the enzyme in this species is believed to be ubiquinone. Couples the redox reaction to proton translocation (for every two electrons transferred, four hydrogen ions are translocated across the cytoplasmic membrane), and thus conserves the redox energy in a proton gradient. The protein is NADH-quinone oxidoreductase subunit N of Salmonella choleraesuis (strain SC-B67).